The following is a 515-amino-acid chain: Cytochrome P450 1A2 (515 aa).

An O-linked (GlcNAc) serine glycan is attached at Ser69. Phe226 serves as a coordination point for substrate. Cys458 provides a ligand contact to heme.

It belongs to the cytochrome P450 family. Interacts with PGRMC1; the interaction requires PGRMC1 homodimerization. Heme is required as a cofactor.

It localises to the endoplasmic reticulum membrane. The protein resides in the microsome membrane. The catalysed reaction is an organic molecule + reduced [NADPH--hemoprotein reductase] + O2 = an alcohol + oxidized [NADPH--hemoprotein reductase] + H2O + H(+). The enzyme catalyses 17beta-estradiol + reduced [NADPH--hemoprotein reductase] + O2 = 2-hydroxy-17beta-estradiol + oxidized [NADPH--hemoprotein reductase] + H2O + H(+). It catalyses the reaction 17beta-estradiol + reduced [NADPH--hemoprotein reductase] + O2 = 4-hydroxy-17beta-estradiol + oxidized [NADPH--hemoprotein reductase] + H2O + H(+). It carries out the reaction estrone + reduced [NADPH--hemoprotein reductase] + O2 = 2-hydroxyestrone + oxidized [NADPH--hemoprotein reductase] + H2O + H(+). The catalysed reaction is estrone + reduced [NADPH--hemoprotein reductase] + O2 = 4-hydroxyestrone + oxidized [NADPH--hemoprotein reductase] + H2O + H(+). The enzyme catalyses cholesterol + reduced [NADPH--hemoprotein reductase] + O2 = 25-hydroxycholesterol + oxidized [NADPH--hemoprotein reductase] + H2O + H(+). It catalyses the reaction all-trans-retinol + reduced [NADPH--hemoprotein reductase] + O2 = all-trans-retinal + oxidized [NADPH--hemoprotein reductase] + 2 H2O + H(+). It carries out the reaction all-trans-retinal + reduced [NADPH--hemoprotein reductase] + O2 = all-trans-retinoate + oxidized [NADPH--hemoprotein reductase] + H2O + 2 H(+). The catalysed reaction is (5Z,8Z,11Z,14Z)-eicosatetraenoate + reduced [NADPH--hemoprotein reductase] + O2 = (14R,15S)-epoxy-(5Z,8Z,11Z)-eicosatrienoate + oxidized [NADPH--hemoprotein reductase] + H2O + H(+). The enzyme catalyses (5Z,8Z,11Z,14Z)-eicosatetraenoate + reduced [NADPH--hemoprotein reductase] + O2 = (14S,15R)-epoxy-(5Z,8Z,11Z)-eicosatrienoate + oxidized [NADPH--hemoprotein reductase] + H2O + H(+). It catalyses the reaction (5Z,8Z,11Z,14Z,17Z)-eicosapentaenoate + reduced [NADPH--hemoprotein reductase] + O2 = (17R,18S)-epoxy-(5Z,8Z,11Z,14Z)-eicosatetraenoate + oxidized [NADPH--hemoprotein reductase] + H2O + H(+). It carries out the reaction (4Z,7Z,10Z,13Z,16Z,19Z)-docosahexaenoate + reduced [NADPH--hemoprotein reductase] + O2 = (19R,20S)-epoxy-(4Z,7Z,10Z,13Z,16Z)-docosapentaenoate + oxidized [NADPH--hemoprotein reductase] + H2O + H(+). The catalysed reaction is (5S)-hydroperoxy-(6E,8Z,11Z,14Z)-eicosatetraenoate = 5-oxo-(6E,8Z,11Z,14Z)-eicosatetraenoate + H2O. The enzyme catalyses (12S)-hydroperoxy-(5Z,8Z,10E,14Z)-eicosatetraenoate = 12-oxo-(5Z,8Z,10E,14Z)-eicosatetraenoate + H2O. It catalyses the reaction (15S)-hydroperoxy-(5Z,8Z,11Z,13E)-eicosatetraenoate = 15-oxo-(5Z,8Z,11Z,13E)-eicosatetraenoate + H2O. It carries out the reaction (13S)-hydroperoxy-(9Z,11E)-octadecadienoate = 13-oxo-(9Z,11E)-octadecadienoate + H2O. The catalysed reaction is (5Z,8Z,11Z,14Z)-eicosatetraenoate + reduced [NADPH--hemoprotein reductase] + O2 = 13-hydroxy-(5Z,8Z,11Z,14Z)-eicosatetraenoate + oxidized [NADPH--hemoprotein reductase] + H2O + H(+). The enzyme catalyses (5Z,8Z,11Z,14Z)-eicosatetraenoate + reduced [NADPH--hemoprotein reductase] + O2 = 19-hydroxy-(5Z,8Z,11Z,14Z)-eicosatetraenoate + oxidized [NADPH--hemoprotein reductase] + H2O + H(+). It catalyses the reaction (9Z,12Z)-octadecadienoate + reduced [NADPH--hemoprotein reductase] + O2 = 11-hydroxy-(9Z,12Z)-octadecadienoate + oxidized [NADPH--hemoprotein reductase] + H2O + H(+). Its pathway is cofactor metabolism; retinol metabolism. The protein operates within steroid metabolism; cholesterol metabolism. It functions in the pathway lipid metabolism; arachidonate metabolism. Its function is as follows. A cytochrome P450 monooxygenase involved in the metabolism of various endogenous substrates, including fatty acids, steroid hormones and vitamins. Mechanistically, uses molecular oxygen inserting one oxygen atom into a substrate, and reducing the second into a water molecule, with two electrons provided by NADPH via cytochrome P450 reductase (NADPH--hemoprotein reductase). Catalyzes the hydroxylation of carbon-hydrogen bonds. Exhibits high catalytic activity for the formation of hydroxyestrogens from estrone (E1) and 17beta-estradiol (E2), namely 2-hydroxy E1 and E2. Metabolizes cholesterol toward 25-hydroxycholesterol, a physiological regulator of cellular cholesterol homeostasis. May act as a major enzyme for all-trans retinoic acid biosynthesis in the liver. Catalyzes two successive oxidative transformation of all-trans retinol to all-trans retinal and then to the active form all-trans retinoic acid. Primarily catalyzes stereoselective epoxidation of the last double bond of polyunsaturated fatty acids (PUFA), displaying a strong preference for the (R,S) stereoisomer. Catalyzes bisallylic hydroxylation and omega-1 hydroxylation of PUFA. May also participate in eicosanoids metabolism by converting hydroperoxide species into oxo metabolites (lipoxygenase-like reaction, NADPH-independent). Plays a role in the oxidative metabolism of xenobiotics. Catalyzes the N-hydroxylation of heterocyclic amines and the O-deethylation of phenacetin. Metabolizes caffeine via N3-demethylation. This is Cytochrome P450 1A2 (CYP1A2) from Cavia porcellus (Guinea pig).